Here is a 655-residue protein sequence, read N- to C-terminus: p-hydroxybenzoic acid efflux pump subunit AaeB (655 aa).

11 helical membrane-spanning segments follow: residues 13–33 (FAVKLATAIVLALFVGFHFQL), 38–58 (WAVLTAAIVAAGPAFAAGGEP), 69–89 (LRIIGTFIGCIAGLVIIIAMI), 93–113 (LLMILVCCIWAGFCTWISSLV), 121–141 (WGLAGYTALIIVITIQPEPLL), 152–172 (EIVIGIVCAIMADLLFSPRSI), 370–390 (LFWLWTGWTSGSGAMVMIAVV), 407–427 (FIYGTLAALPLGLLYFLVIIP), 431–451 (QSMLLLCISLAVLGFFLGIEV), 459–479 (MGALASTINIIVLDNPMTFHF), and 482–502 (FLDSALGQIVGCVLAFTVILL).

The protein belongs to the aromatic acid exporter ArAE (TC 2.A.85) family.

The protein localises to the cell inner membrane. In terms of biological role, forms an efflux pump with AaeA. Could function as a metabolic relief valve, allowing to eliminate certain compounds when they accumulate to high levels in the cell. The sequence is that of p-hydroxybenzoic acid efflux pump subunit AaeB from Escherichia coli O7:K1 (strain IAI39 / ExPEC).